Here is a 131-residue protein sequence, read N- to C-terminus: Small ribosomal subunit protein uS8 (131 aa).

It belongs to the universal ribosomal protein uS8 family. In terms of assembly, part of the 30S ribosomal subunit. Contacts proteins S5 and S12.

Its function is as follows. One of the primary rRNA binding proteins, it binds directly to 16S rRNA central domain where it helps coordinate assembly of the platform of the 30S subunit. This chain is Small ribosomal subunit protein uS8, found in Geobacillus stearothermophilus (Bacillus stearothermophilus).